Here is a 351-residue protein sequence, read N- to C-terminus: MTLRLLEDWCRGMDMNPRKALLIAGISQSCSVAEIEEALQAGLAPLGEYRLLGRMFRRDENRKVALVGLTAETSHALVPKEIPGKGGIWRVIFKPPDPDNTFLSRLNEFLAGEGMTVGELSRALGHENGSLDPEQGMIPEMWAPMLAQALEALQPALQCLKYKKLRVFSGRESPEPGEEEFGRWMFHTTQMIKAWQVPDVEKRRRLLESLRGPALDVIRVLKINNPLITVDECLQALEEVFGVTDNPRELQVKYLTTYQKDEEKLSAYVLRLEPLLQKLVQRGAIERDAVNQARLDQVIAGAVHKTIRRELNLPEDGPAPGFLQLLVLIKDYEAAEEEEALLQAILEGNFT.

Positions tyrosine 49 to leucine 52 match the LIR motif. Positions leucine 120–glutamate 127 are BH3-like. The segment at lysine 202–arginine 205 is RASSF1-binding.

The protein belongs to the PNMA family. As to quaternary structure, homodimer. Under normal circumstances, held in an inactive conformation by an intramolecular interaction. Interacts with BAX. Binding to RASSF1 isoform A (RASSF1A) relieves this inhibitory interaction and allows further binding to BAX. Also binds to BCL2 and BCLX. Recruited to the TNFRSF1A and TNFRSF10A complexes in response to their respective cognate ligand, after internalization. Interacts with TRIM39. Interacts with RASSF6. Interacts with ATG8 proteins MAP1LC3A, MAP1LC3B and MAP1LC3C. Does not interact with ATG8 proteins GABARAPL1, GABARAPL2 and GABARAP. Interacts with SQSTM1; promoting dissociation of SQSTM1 inclusion bodies that sequester KEAP1. In terms of processing, ubiquitinated and degraded during mitotic exit by APC/C-Cdh1, this modification is inhibited by TRIM39. Widely expressed, with high levels in heart and brain.

It localises to the cytoplasm. Its subcellular location is the cytosol. The protein localises to the mitochondrion outer membrane. The protein resides in the extracellular vesicle membrane. Retrotransposon-derived protein that forms virion-like capsids. Acts as an effector of BAX during apoptosis: enriched at outer mitochondria membrane and associates with BAX upon induction of apoptosis, facilitating BAX-dependent mitochondrial outer membrane permeabilization and apoptosis. Required for death receptor-dependent apoptosis. When associated with RASSF1, promotes BAX conformational change and translocation to mitochondrial membranes in response to TNF and TNFSF10 stimulation. Also promotes autophagy: promotes phagophore closure via association with ATG8 proteins. Acts as an inhibitor of the NFE2L2/NRF2 pathway via interaction with SQSTM1: interaction promotes dissociation of SQSTM1 inclusion bodies that sequester KEAP1, relieving inactivation of the BCR(KEAP1) complex. The protein is Modulator of apoptosis 1 of Homo sapiens (Human).